A 489-amino-acid chain; its full sequence is Cysteine--tRNA ligase (489 aa).

Position 29 (C29) interacts with Zn(2+). Positions 31-41 match the 'HIGH' region motif; the sequence is ITSYDYCHIGH. Zn(2+) is bound by residues C209, H234, and E238. Positions 266-270 match the 'KMSKS' region motif; the sequence is KMSKS. Residue K269 coordinates ATP.

Belongs to the class-I aminoacyl-tRNA synthetase family. As to quaternary structure, monomer. It depends on Zn(2+) as a cofactor.

It is found in the cytoplasm. The catalysed reaction is tRNA(Cys) + L-cysteine + ATP = L-cysteinyl-tRNA(Cys) + AMP + diphosphate. This is Cysteine--tRNA ligase from Desulfotalea psychrophila (strain LSv54 / DSM 12343).